The chain runs to 241 residues: Chromosome partition protein MukE (241 aa).

The segment at 207–241 (DGEAATPDSLSQEKSAVKNDEEIEDELDEGLGEEE) is disordered. Residues 227–241 (EEIEDELDEGLGEEE) are compositionally biased toward acidic residues.

Belongs to the MukE family. In terms of assembly, interacts, and probably forms a ternary complex, with MukF and MukB. The complex formation is stimulated by calcium or magnesium.

The protein localises to the cytoplasm. Its subcellular location is the nucleoid. Functionally, involved in chromosome condensation, segregation and cell cycle progression. May participate in facilitating chromosome segregation by condensation DNA from both sides of a centrally located replisome during cell division. Probably acts via its interaction with MukB and MukF. The polypeptide is Chromosome partition protein MukE (Mannheimia succiniciproducens (strain KCTC 0769BP / MBEL55E)).